Consider the following 320-residue polypeptide: Beta-ketoacyl-[acyl-carrier-protein] synthase III (320 aa).

Catalysis depends on residues Cys-114 and His-247. The tract at residues 248 to 252 (QANRR) is ACP-binding. The active site involves Asn-277.

This sequence belongs to the thiolase-like superfamily. FabH family. As to quaternary structure, homodimer.

It localises to the cytoplasm. It carries out the reaction malonyl-[ACP] + acetyl-CoA + H(+) = 3-oxobutanoyl-[ACP] + CO2 + CoA. Its pathway is lipid metabolism; fatty acid biosynthesis. Its function is as follows. Catalyzes the condensation reaction of fatty acid synthesis by the addition to an acyl acceptor of two carbons from malonyl-ACP. Catalyzes the first condensation reaction which initiates fatty acid synthesis and may therefore play a role in governing the total rate of fatty acid production. Possesses both acetoacetyl-ACP synthase and acetyl transacylase activities. Its substrate specificity determines the biosynthesis of branched-chain and/or straight-chain of fatty acids. The polypeptide is Beta-ketoacyl-[acyl-carrier-protein] synthase III (Neisseria meningitidis serogroup C (strain 053442)).